The following is a 1116-amino-acid chain: Large proline-rich protein bag6-B (1116 aa).

The region spanning 7–82 (MDVTVKTLDS…HLVERAPPQT (76 aa)) is the Ubiquitin-like domain. Disordered regions lie at residues 76–114 (ERAP…RNGN), 170–221 (EGQP…PSEY), 329–385 (STTG…HPHP), 473–502 (PAAP…APGA), 533–589 (GGSS…GTDQ), 640–678 (VPVS…ESLP), and 1058–1080 (TGAK…EAQG). A compositionally biased stretch (low complexity) spans 79–100 (PPQTQTSTSGPSTSSSTSPSSS). Polar residues predominate over residues 194–207 (RETLPQTTQNADGQ). The span at 208 to 219 (SNSTPTSHPSPS) shows a compositional bias: low complexity. The segment covering 344 to 353 (GNATPSTNTS) has biased composition (polar residues). Low complexity-rich tracts occupy residues 482 to 502 (PGAA…APGA), 535 to 580 (SSTS…SVPS), and 641 to 652 (PVSTSPPQSASQ). A compositionally biased stretch (pro residues) spans 653–672 (APPPPSSPAPPAHSAPPPAA). The segment covering 1068–1080 (CVKRELDNSEAQG) has biased composition (basic and acidic residues).

As to quaternary structure, component of the bag6/bat3 complex.

It is found in the cytoplasm. It localises to the cytosol. The protein resides in the nucleus. Its subcellular location is the secreted. The protein localises to the extracellular exosome. In terms of biological role, ATP-independent molecular chaperone preventing the aggregation of misfolded and hydrophobic patches-containing proteins. Functions as part of a cytosolic protein quality control complex, the bag6/bat3 complex, which maintains these client proteins in a soluble state and participates in their proper delivery to the endoplasmic reticulum or alternatively can promote their sorting to the proteasome where they undergo degradation. The bag6/bat3 complex is involved in the post-translational delivery of tail-anchored/type II transmembrane proteins to the endoplasmic reticulum membrane. Similarly, the bag6/bat3 complex also functions as a sorting platform for proteins of the secretory pathway that are mislocalized to the cytosol either delivering them to the proteasome for degradation or to the endoplasmic reticulum. The bag6/bat3 complex also plays a role in the endoplasmic reticulum-associated degradation (ERAD), a quality control mechanism that eliminates unwanted proteins of the endoplasmic reticulum through their retrotranslocation to the cytosol and their targeting to the proteasome. It maintains these retrotranslocated proteins in an unfolded yet soluble state condition in the cytosol to ensure their proper delivery to the proteasome. Also required for selective ubiquitin-mediated degradation of defective nascent chain polypeptides by the proteasome. Also involved in endoplasmic reticulum stress-induced pre-emptive quality control, a mechanism that selectively attenuates the translocation of newly synthesized proteins into the endoplasmic reticulum and reroutes them to the cytosol for proteasomal degradation. May ensure the proper degradation of these proteins and thereby protects the endoplasmic reticulum from protein overload upon stress. By stabilizing a large spectrum of proteins, may indirectly affect different biological processes including apoptosis. By controlling the steady-state expression of the IGF1R receptor, indirectly regulates the insulin-like growth factor receptor signaling pathway. When nuclear, may also act as a component of some chromatin regulator complex. This chain is Large proline-rich protein bag6-B, found in Xenopus laevis (African clawed frog).